Consider the following 532-residue polypeptide: SET and MYND domain-containing protein DDB_G0288495 (532 aa).

One can recognise an SET domain in the interval 25 to 448 (PWIEVKSVSE…ENQELLITYI (424 aa)). An MYND-type; degenerate zinc finger spans residues 70-116 (CTTCFKILLESNRHNFQTCPSCFQVNYCSNYCKQYSKIETKHTELEC). Residues 199–240 (INSKNNNEFENEEEEEEEQEQKGEGEQEENENNENNEKVKKK) are a coiled coil. The interval 204–234 (NNEFENEEEEEEEQEQKGEGEQEENENNENN) is disordered. The segment covering 207 to 217 (FENEEEEEEEQ) has biased composition (acidic residues).

This sequence belongs to the class V-like SAM-binding methyltransferase superfamily.

Functionally, probable methyltransferase. The protein is SET and MYND domain-containing protein DDB_G0288495 of Dictyostelium discoideum (Social amoeba).